The chain runs to 258 residues: Nuclear egress protein 2 (258 aa).

At 1-228 (MLKEKMYDEL…TVPIFARRNN (228 aa)) the chain is on the perinuclear space side. Residues 229–249 (ILCGFLVAALLIVCYVIFKEF) traverse the membrane as a helical segment. The Nuclear segment spans residues 250 to 258 (ALSADFSAV).

It belongs to the herpesviridae NEC2 protein family. In terms of assembly, forms a heterohexameric complex with NEC1. Post-translationally, phosphorylated.

It localises to the host nucleus inner membrane. Its function is as follows. Plays an essential role in virion nuclear egress, the first step of virion release from infected cell. Within the host nucleus, NEC1 interacts with the newly formed capsid through the vertexes and directs it to the inner nuclear membrane by associating with NEC2. Induces the budding of the capsid at the inner nuclear membrane as well as its envelopment into the perinuclear space. There, the NEC1/NEC2 complex promotes the fusion of the enveloped capsid with the outer nuclear membrane and the subsequent release of the viral capsid into the cytoplasm where it will reach the secondary budding sites in the host Golgi or trans-Golgi network. The polypeptide is Nuclear egress protein 2 (Homo sapiens (Human)).